The primary structure comprises 478 residues: UDP-N-acetylmuramate--L-alanine ligase (478 aa).

ATP is bound at residue 112 to 118 (GTHGKTT).

This sequence belongs to the MurCDEF family.

It localises to the cytoplasm. The catalysed reaction is UDP-N-acetyl-alpha-D-muramate + L-alanine + ATP = UDP-N-acetyl-alpha-D-muramoyl-L-alanine + ADP + phosphate + H(+). It participates in cell wall biogenesis; peptidoglycan biosynthesis. Functionally, cell wall formation. The sequence is that of UDP-N-acetylmuramate--L-alanine ligase from Polynucleobacter asymbioticus (strain DSM 18221 / CIP 109841 / QLW-P1DMWA-1) (Polynucleobacter necessarius subsp. asymbioticus).